The primary structure comprises 689 residues: DNA topoisomerase 1 (689 aa).

The 111-residue stretch at 3–113 (DNLVIVESPA…KENRVVFNEI (111 aa)) folds into the Toprim domain. 2 residues coordinate Mg(2+): glutamate 9 and aspartate 82. One can recognise a Topo IA-type catalytic domain in the interval 129 to 557 (EMNLVDAQQA…FFSSFKQDVE (429 aa)). An interaction with DNA region spans residues 163 to 168 (SAGRVQ). The active-site O-(5'-phospho-DNA)-tyrosine intermediate is tyrosine 298. Residues 328 to 357 (SKRKASGKQGDQDAHEAIRPSSTMRTPDDM) are disordered. 3 C4-type zinc fingers span residues 577-603 (CEVCGSPMVIKMGRYGKFMACSNFPDC), 617-645 (CPKCNDGDVVERKSKKNRVFYGCSKYPEC), and 658-681 (CPKCNQYLVENKKGKTTQVICSNC).

Belongs to the type IA topoisomerase family. Monomer. It depends on Mg(2+) as a cofactor.

The catalysed reaction is ATP-independent breakage of single-stranded DNA, followed by passage and rejoining.. In terms of biological role, releases the supercoiling and torsional tension of DNA, which is introduced during the DNA replication and transcription, by transiently cleaving and rejoining one strand of the DNA duplex. Introduces a single-strand break via transesterification at a target site in duplex DNA. The scissile phosphodiester is attacked by the catalytic tyrosine of the enzyme, resulting in the formation of a DNA-(5'-phosphotyrosyl)-enzyme intermediate and the expulsion of a 3'-OH DNA strand. The free DNA strand then undergoes passage around the unbroken strand, thus removing DNA supercoils. Finally, in the religation step, the DNA 3'-OH attacks the covalent intermediate to expel the active-site tyrosine and restore the DNA phosphodiester backbone. In Staphylococcus aureus, this protein is DNA topoisomerase 1.